The sequence spans 511 residues: MDQPAGLQVDYIFRGVEHAVRVVVSGQVLELEVEDRMTADQWRGEFDANFIEDLTHKTGNFKQFSIFCNMLESALTQSSESVTLDLLTYTDLESLRSRKLGGRPGALAPRSAQLNSKRYLILIYSVEFDRIHYPLPLPYQGKPDPVVLQGIIRSLKEELGHLRGLNGGQDARETEIWHLREQVTRLTSEKRELEAQLGRSREEALAGRAARQEAESLRGLVRGLELELRQERGLGGRAAGRRSQDSRRLAKELEEVKASERNLRARLKTLNSELAMYRRGRRTLPPVAVREGRASSSRERSTSRGRAVTRSSSRESSRGARGRGRPAHPSPSPTGSRAPRFDPTAFVKAKEKKQREIRMKQQQQQRNRMGSGGSGDGPSVSWSQQTRPAAAVTGRGDAVNRSRNRSSSVDSFRSRCSSVSSCSELEDFSHSVSRSRRCRGRGKPPSPTPWSRSKTKSTTQERSDHQRHLASSGGWVPIKEYSSDFQGADMAEIDARLKALQEYMNRLDTRS.

Methionine 1 is subject to N-acetylmethionine. The tract at residues 1-143 is head domain; that stretch reads MDQPAGLQVD…PLPLPYQGKP (143 aa). Coiled coils occupy residues 176 to 203 and 246 to 273; these read IWHL…SREE and SRRL…LNSE. A Phosphothreonine modification is found at threonine 283. Disordered stretches follow at residues 284–413 and 429–476; these read LPPV…DSFR and SHSV…GGWV. Residues 290–302 are compositionally biased toward basic and acidic residues; the sequence is REGRASSSRERST. Residues serine 330 and serine 332 each carry the phosphoserine modification. A compositionally biased stretch (low complexity) spans 360 to 369; the sequence is KQQQQQRNRM. Serine 371 and serine 374 each carry phosphoserine. The segment covering 433-442 has biased composition (basic residues); that stretch reads SRSRRCRGRG. Serine 446 carries the post-translational modification Phosphoserine. The segment covering 449–458 has biased composition (polar residues); the sequence is PWSRSKTKST. Serine 472 carries the phosphoserine modification.

This sequence belongs to the CCDC61 family. As to quaternary structure, forms homodimers (via head domain). Interacts with CEP170. Interacts with PCM1 and CEP131. Binds tubulin.

The protein localises to the cytoplasm. The protein resides in the cytoskeleton. It localises to the microtubule organizing center. It is found in the centrosome. Its subcellular location is the centriolar satellite. The protein localises to the cilium basal body. Microtubule-binding centrosomal protein required for centriole cohesion, independently of the centrosome-associated protein/CEP250 and rootletin/CROCC linker. In interphase, required for anchoring microtubule at the mother centriole subdistal appendages and for centrosome positioning. During mitosis, may be involved in spindle assembly and chromatin alignment by regulating the organization of spindle microtubules into a symmetrical structure. Plays a non-essential role in ciliogenesis. This chain is Centrosomal protein CCDC61, found in Mus musculus (Mouse).